Here is a 330-residue protein sequence, read N- to C-terminus: Ferredoxin--NADP reductase (330 aa).

The FAD site is built by E35, Q43, Y48, V90, F123, D285, and T326.

This sequence belongs to the ferredoxin--NADP reductase type 2 family. In terms of assembly, homodimer. It depends on FAD as a cofactor.

It catalyses the reaction 2 reduced [2Fe-2S]-[ferredoxin] + NADP(+) + H(+) = 2 oxidized [2Fe-2S]-[ferredoxin] + NADPH. This chain is Ferredoxin--NADP reductase, found in Streptococcus pyogenes serotype M6 (strain ATCC BAA-946 / MGAS10394).